A 174-amino-acid chain; its full sequence is Disulfide bond formation protein B (174 aa).

Residues 1–17 lie on the Cytoplasmic side of the membrane; sequence MSFQVVTGWLDNSPRRI. A helical transmembrane segment spans residues 18 to 34; that stretch reads FAFVSLASIGMLAFGQY. Over 35 to 52 the chain is Periplasmic; sequence LQHVVGLEPCPMCIVQRY. Cysteines 44 and 47 form a disulfide. Residues 53-67 form a helical membrane-spanning segment; that stretch reads ALVLVAIIAGLTGAS. Residues 68 to 74 are Cytoplasmic-facing; the sequence is GRKGLHL. Residues 75-92 form a helical membrane-spanning segment; sequence GGAVLMLGSSGFGAYVAA. Topologically, residues 93-148 are periplasmic; the sequence is RQSWLQWYPPEVVSCGRDFYGMIETFPLQRAIPMIFKGSGDCSKVDWTFLGGSIAN. Cysteine 107 and cysteine 134 form a disulfide bridge. The chain crosses the membrane as a helical span at residues 149–167; the sequence is WTFVVFGLIVLLSLALIWR. The Cytoplasmic segment spans residues 168–174; the sequence is RVSRRVS.

This sequence belongs to the DsbB family.

Its subcellular location is the cell inner membrane. Required for disulfide bond formation in some periplasmic proteins. Acts by oxidizing the DsbA protein. This is Disulfide bond formation protein B from Albidiferax ferrireducens (strain ATCC BAA-621 / DSM 15236 / T118) (Rhodoferax ferrireducens).